We begin with the raw amino-acid sequence, 540 residues long: Putative cysteine ligase BshC (540 aa).

Residues 455-491 (GKENLKRLIRVVNSFEEKVKQRHRKNNQVAIQQLQKI) are a coiled coil.

This sequence belongs to the BshC family.

Involved in bacillithiol (BSH) biosynthesis. May catalyze the last step of the pathway, the addition of cysteine to glucosamine malate (GlcN-Mal) to generate BSH. In Desulforamulus reducens (strain ATCC BAA-1160 / DSM 100696 / MI-1) (Desulfotomaculum reducens), this protein is Putative cysteine ligase BshC.